The primary structure comprises 837 residues: Protein translocase subunit SecA (837 aa).

ATP contacts are provided by residues glutamine 85, 103-107 (GEGKT), and aspartate 493. The Zn(2+) site is built by cysteine 821, cysteine 823, cysteine 832, and histidine 833.

This sequence belongs to the SecA family. In terms of assembly, monomer and homodimer. Part of the essential Sec protein translocation apparatus which comprises SecA, SecYEG and auxiliary proteins SecDF. Other proteins may also be involved. Requires Zn(2+) as cofactor.

It localises to the cell membrane. The protein localises to the cytoplasm. It catalyses the reaction ATP + H2O + cellular proteinSide 1 = ADP + phosphate + cellular proteinSide 2.. Its function is as follows. Part of the Sec protein translocase complex. Interacts with the SecYEG preprotein conducting channel. Has a central role in coupling the hydrolysis of ATP to the transfer of proteins into and across the cell membrane, serving as an ATP-driven molecular motor driving the stepwise translocation of polypeptide chains across the membrane. The chain is Protein translocase subunit SecA from Streptococcus pneumoniae serotype 2 (strain D39 / NCTC 7466).